Here is a 274-residue protein sequence, read N- to C-terminus: 2,3,4,5-tetrahydropyridine-2,6-dicarboxylate N-succinyltransferase (274 aa).

The substrate site is built by Arg106 and Asp143.

It belongs to the transferase hexapeptide repeat family. Homotrimer.

It is found in the cytoplasm. The enzyme catalyses (S)-2,3,4,5-tetrahydrodipicolinate + succinyl-CoA + H2O = (S)-2-succinylamino-6-oxoheptanedioate + CoA. It participates in amino-acid biosynthesis; L-lysine biosynthesis via DAP pathway; LL-2,6-diaminopimelate from (S)-tetrahydrodipicolinate (succinylase route): step 1/3. The sequence is that of 2,3,4,5-tetrahydropyridine-2,6-dicarboxylate N-succinyltransferase from Rickettsia felis (strain ATCC VR-1525 / URRWXCal2) (Rickettsia azadi).